Here is a 187-residue protein sequence, read N- to C-terminus: HTH-type transcriptional repressor Rv1474c (187 aa).

The 61-residue stretch at 10–70 folds into the HTH tetR-type domain; that stretch reads AARRRQILDG…ALAREDTERM (61 aa). Positions 33–52 form a DNA-binding region, H-T-H motif; it reads TVRRLEQAIGMSRGAIFHHF.

As to quaternary structure, homodimer.

With respect to regulation, binding to DNA is abolished in the presence of high concentration of iron. Specifically binds to tetracycline, which leads to a conformational change in the structure of the protein and inhibits the DNA binding activity. Represses the expression of the aconitase gene acn and its own expression, in an iron-responsive manner. Binds to the inverted repeat element present in the upstream region of acn (Rv1475c)-Rv1474c operon. Preferentially binds to major groove of the DNA. In Mycobacterium tuberculosis (strain ATCC 25618 / H37Rv), this protein is HTH-type transcriptional repressor Rv1474c.